A 318-amino-acid chain; its full sequence is Cis-3-alkyl-4-alkyloxetan-2-one decarboxylase (318 aa).

In terms of domain architecture, AB hydrolase-1 spans 30-275 (PVVMVHGNPS…ADCGHYILED (246 aa)).

This sequence belongs to the AB hydrolase superfamily.

The catalysed reaction is a cis-3-alkyl-4-alkyloxetan-2-one = a cis-alkene + CO2. Involved in olefin biosynthesis. Catalyzes the elimination of carbon dioxide from beta-lactones to form the final olefin product. The S.oneidensis oleABCD genes produce 3,6,9,12,15,19,22,25,28-hentriacontanonaene, which may aid the cells in adapting to a sudden drop in temperature. The polypeptide is Cis-3-alkyl-4-alkyloxetan-2-one decarboxylase (Shewanella oneidensis (strain ATCC 700550 / JCM 31522 / CIP 106686 / LMG 19005 / NCIMB 14063 / MR-1)).